Reading from the N-terminus, the 841-residue chain is Protein translocase subunit SecA (841 aa).

Residues Gln86, 104-108, and Asp493 contribute to the ATP site; that span reads GEGKT. The segment at 788–822 is disordered; that stretch reads EEVAEGKAVRPSANGQEDKKAKRKPVRKAENIGRN. Zn(2+) is bound by residues Cys825, Cys827, Cys836, and Cys837.

This sequence belongs to the SecA family. Monomer and homodimer. Part of the essential Sec protein translocation apparatus which comprises SecA, SecYEG and auxiliary proteins SecDF. Other proteins may also be involved. Zn(2+) is required as a cofactor.

Its subcellular location is the cell membrane. It localises to the cytoplasm. It carries out the reaction ATP + H2O + cellular proteinSide 1 = ADP + phosphate + cellular proteinSide 2.. Functionally, part of the Sec protein translocase complex. Interacts with the SecYEG preprotein conducting channel. Has a central role in coupling the hydrolysis of ATP to the transfer of proteins into and across the cell membrane, serving as an ATP-driven molecular motor driving the stepwise translocation of polypeptide chains across the membrane. The polypeptide is Protein translocase subunit SecA (Shouchella clausii (strain KSM-K16) (Alkalihalobacillus clausii)).